The following is a 338-amino-acid chain: Ferrochelatase (338 aa).

Residues H189 and E294 each coordinate Fe cation.

It belongs to the ferrochelatase family.

It localises to the cytoplasm. The enzyme catalyses heme b + 2 H(+) = protoporphyrin IX + Fe(2+). It functions in the pathway porphyrin-containing compound metabolism; protoheme biosynthesis; protoheme from protoporphyrin-IX: step 1/1. Its function is as follows. Catalyzes the ferrous insertion into protoporphyrin IX. The polypeptide is Ferrochelatase (Pseudomonas putida (strain ATCC 700007 / DSM 6899 / JCM 31910 / BCRC 17059 / LMG 24140 / F1)).